Here is a 214-residue protein sequence, read N- to C-terminus: Probable nicotinate-nucleotide adenylyltransferase (214 aa).

It belongs to the NadD family.

The enzyme catalyses nicotinate beta-D-ribonucleotide + ATP + H(+) = deamido-NAD(+) + diphosphate. Its pathway is cofactor biosynthesis; NAD(+) biosynthesis; deamido-NAD(+) from nicotinate D-ribonucleotide: step 1/1. Catalyzes the reversible adenylation of nicotinate mononucleotide (NaMN) to nicotinic acid adenine dinucleotide (NaAD). This Psychromonas ingrahamii (strain DSM 17664 / CCUG 51855 / 37) protein is Probable nicotinate-nucleotide adenylyltransferase.